Reading from the N-terminus, the 228-residue chain is Cytochrome c oxidase subunit 2 (228 aa).

The Mitochondrial intermembrane segment spans residues 1–14 (MANHSQLGFQDASS). The chain crosses the membrane as a helical span at residues 15–45 (PIMEELVEFHDHALIVALAICSLVLYLLAHM). The Mitochondrial matrix portion of the chain corresponds to 46 to 58 (LMEKLSSNAVDAQ). A helical membrane pass occupies residues 59–86 (EVELIWTILPAIVLVLLALPSLQILYMM). The Mitochondrial intermembrane portion of the chain corresponds to 87–228 (DEIDEPDLTL…EAWSSLLSSS (142 aa)). Cu cation is bound by residues His160, Cys195, Glu197, Cys199, His203, and Met206. Glu197 provides a ligand contact to Mg(2+).

The protein belongs to the cytochrome c oxidase subunit 2 family. In terms of assembly, component of the cytochrome c oxidase (complex IV, CIV), a multisubunit enzyme composed of 14 subunits. The complex is composed of a catalytic core of 3 subunits MT-CO1, MT-CO2 and MT-CO3, encoded in the mitochondrial DNA, and 11 supernumerary subunits COX4I, COX5A, COX5B, COX6A, COX6B, COX6C, COX7A, COX7B, COX7C, COX8 and NDUFA4, which are encoded in the nuclear genome. The complex exists as a monomer or a dimer and forms supercomplexes (SCs) in the inner mitochondrial membrane with NADH-ubiquinone oxidoreductase (complex I, CI) and ubiquinol-cytochrome c oxidoreductase (cytochrome b-c1 complex, complex III, CIII), resulting in different assemblies (supercomplex SCI(1)III(2)IV(1) and megacomplex MCI(2)III(2)IV(2)). Found in a complex with TMEM177, COA6, COX18, COX20, SCO1 and SCO2. Interacts with TMEM177 in a COX20-dependent manner. Interacts with COX20. Interacts with COX16. The cofactor is Cu cation.

It localises to the mitochondrion inner membrane. It carries out the reaction 4 Fe(II)-[cytochrome c] + O2 + 8 H(+)(in) = 4 Fe(III)-[cytochrome c] + 2 H2O + 4 H(+)(out). Its function is as follows. Component of the cytochrome c oxidase, the last enzyme in the mitochondrial electron transport chain which drives oxidative phosphorylation. The respiratory chain contains 3 multisubunit complexes succinate dehydrogenase (complex II, CII), ubiquinol-cytochrome c oxidoreductase (cytochrome b-c1 complex, complex III, CIII) and cytochrome c oxidase (complex IV, CIV), that cooperate to transfer electrons derived from NADH and succinate to molecular oxygen, creating an electrochemical gradient over the inner membrane that drives transmembrane transport and the ATP synthase. Cytochrome c oxidase is the component of the respiratory chain that catalyzes the reduction of oxygen to water. Electrons originating from reduced cytochrome c in the intermembrane space (IMS) are transferred via the dinuclear copper A center (CU(A)) of subunit 2 and heme A of subunit 1 to the active site in subunit 1, a binuclear center (BNC) formed by heme A3 and copper B (CU(B)). The BNC reduces molecular oxygen to 2 water molecules using 4 electrons from cytochrome c in the IMS and 4 protons from the mitochondrial matrix. The protein is Cytochrome c oxidase subunit 2 (MT-CO2) of Anas platyrhynchos (Mallard).